A 202-amino-acid polypeptide reads, in one-letter code: Small ribosomal subunit protein uS4 (202 aa).

An S4 RNA-binding domain is found at 91–168 (SRLSSVLYNS…QKVPDYLEVD (78 aa)).

The protein belongs to the universal ribosomal protein uS4 family. As to quaternary structure, part of the 30S ribosomal subunit. Contacts protein S5. The interaction surface between S4 and S5 is involved in control of translational fidelity.

Functionally, one of the primary rRNA binding proteins, it binds directly to 16S rRNA where it nucleates assembly of the body of the 30S subunit. With S5 and S12 plays an important role in translational accuracy. This chain is Small ribosomal subunit protein uS4, found in Ehrlichia chaffeensis (strain ATCC CRL-10679 / Arkansas).